The primary structure comprises 258 residues: Phosphate import ATP-binding protein PstB 1 (258 aa).

The 243-residue stretch at 5 to 247 (LDLTDVNIYY…EKIFSNPNQK (243 aa)) folds into the ABC transporter domain. 37 to 44 (GPSGCGKT) contacts ATP.

It belongs to the ABC transporter superfamily. Phosphate importer (TC 3.A.1.7) family. As to quaternary structure, the complex is composed of two ATP-binding proteins (PstB), two transmembrane proteins (PstC and PstA) and a solute-binding protein (PstS).

The protein localises to the cell membrane. The enzyme catalyses phosphate(out) + ATP + H2O = ADP + 2 phosphate(in) + H(+). Its function is as follows. Part of the ABC transporter complex PstSACB involved in phosphate import. Responsible for energy coupling to the transport system. This chain is Phosphate import ATP-binding protein PstB 1, found in Mycobacterium bovis (strain ATCC BAA-935 / AF2122/97).